Reading from the N-terminus, the 511-residue chain is Inner membrane ABC transporter permease protein YnjC (511 aa).

Residues 1–8 (MATPLRYA) lie on the Cytoplasmic side of the membrane. Residues 9–29 (LIFLLWAMVAVIYAPLIPAAL) traverse the membrane as a helical segment. The Periplasmic portion of the chain corresponds to 30–62 (TLISPALSLTHWQALFADPQLPQALLATLVSTT). In terms of domain architecture, ABC transmembrane type-1 1 spans 54 to 255 (LLATLVSTTI…MLLLAAYVLL (202 aa)). Residues 63–83 (IAAVGALLIALLVIVALWPGP) traverse the membrane as a helical segment. Over 84–91 (KWQRMCAR) the chain is Cytoplasmic. Residues 92-112 (LPWLLAIPHVAFATSALLLFA) traverse the membrane as a helical segment. The Periplasmic portion of the chain corresponds to 113–130 (DGGLLYDYFPYFTPPMDR). Residues 131-151 (FGIGLGLTLAVKESAFLLWIL) form a helical membrane-spanning segment. The Cytoplasmic segment spans residues 152–189 (AAVLSEKWLLQQVIVLDSLGYSRWQCLNWLLLPSVAPA). The helical transmembrane segment at 190–210 (LAMAMLAIVAWSLSVVDVAII) threads the bilayer. The Periplasmic segment spans residues 211–239 (LGPGNPPTLAVISWQWLTQGDIDQQTKGA). Residues 240-260 (LASLLLMLLLAAYVLLSYLLW) traverse the membrane as a helical segment. Over 261 to 284 (RSWRRTIPRVDGVRKPATPLLPGN) the chain is Cytoplasmic. The helical transmembrane segment at 285–305 (TLAIFLPLTGVLCVVLLAILA) threads the bilayer. Topologically, residues 306 to 318 (DQSTINSEALINS) are periplasmic. The ABC transmembrane type-1 2 domain maps to 315–496 (LINSLTMGLV…LLPLIIFALT (182 aa)). The helical transmembrane segment at 319-339 (LTMGLVATFIALLLLLLWLEW) threads the bilayer. The Cytoplasmic segment spans residues 340–345 (GPQRRQ). Residues 346–366 (LWLWLPILLPALPLVAGQYTL) form a helical membrane-spanning segment. Topologically, residues 367 to 374 (ALWLKLDG) are periplasmic. The helical transmembrane segment at 375–395 (SWTAVVWGHLLWVMPWMLFIL) threads the bilayer. At 396–432 (QPAWQRIDSRLILIAQTLGWSRAKIFFYVKCPLMLRP) the chain is on the cytoplasmic side. Residues 433-453 (VLIAFAVGFAVGIAQYMPTLW) traverse the membrane as a helical segment. Topologically, residues 454–485 (LGAGRFPTLTTEAVALSSGGSNGILAAQALWQ) are periplasmic. The chain crosses the membrane as a helical span at residues 486 to 506 (LLLPLIIFALTALVAKWVGYV). The Cytoplasmic segment spans residues 507–511 (RQGLR).

The protein belongs to the binding-protein-dependent transport system permease family.

Its subcellular location is the cell inner membrane. Probably part of the binding-protein-dependent transport system YnjCD. Probably responsible for the translocation of the substrate across the membrane. The polypeptide is Inner membrane ABC transporter permease protein YnjC (ynjC) (Escherichia coli (strain K12)).